We begin with the raw amino-acid sequence, 494 residues long: Cytochrome P450 2A6 (494 aa).

Substrate contacts are provided by Phe107 and Asn297. Cys439 contributes to the heme binding site.

Belongs to the cytochrome P450 family. It depends on heme as a cofactor. In terms of tissue distribution, liver.

The protein localises to the endoplasmic reticulum membrane. It is found in the microsome membrane. It carries out the reaction 1,4-cineole + reduced [NADPH--hemoprotein reductase] + O2 = 2-exo-hydroxy-1,4-cineole + oxidized [NADPH--hemoprotein reductase] + H2O + H(+). Exhibits a high coumarin 7-hydroxylase activity. Can act in the hydroxylation of the anti-cancer drugs cyclophosphamide and ifosphamide. Competent in the metabolic activation of aflatoxin B1. Constitutes the major nicotine C-oxidase. Acts as a 1,4-cineole 2-exo-monooxygenase. Possesses low phenacetin O-deethylation activity. This chain is Cytochrome P450 2A6 (CYP2A6), found in Homo sapiens (Human).